A 218-amino-acid chain; its full sequence is Alkylmercury lyase (218 aa).

The protein belongs to the MerB family.

It carries out the reaction an alkylmercury + H(+) = an alkane + Hg(2+). Cleaves the carbon-mercury bond of organomercurials such as phenylmercuric acetate. One product is Hg(2+), which is subsequently detoxified by the mercuric reductase. In Bacillus cereus, this protein is Alkylmercury lyase (merB1).